Here is a 496-residue protein sequence, read N- to C-terminus: NADP-dependent glyceraldehyde-3-phosphate dehydrogenase (496 aa).

Substrate-binding positions include arginine 116 and 169–170 (NY). Residues lysine 192, threonine 195, and aspartate 230 each coordinate NADP(+). 245–249 (GGDTG) is an NAD(+) binding site. Catalysis depends on glutamate 264, which acts as the Proton acceptor. Residue 297 to 299 (RCT) participates in substrate binding. The active-site Nucleophile is the cysteine 298. Residue glutamate 391 participates in NADP(+) binding. Arginine 451 lines the substrate pocket.

The protein belongs to the aldehyde dehydrogenase family.

The protein localises to the cytoplasm. Its subcellular location is the cytosol. The enzyme catalyses D-glyceraldehyde 3-phosphate + NADP(+) + H2O = (2R)-3-phosphoglycerate + NADPH + 2 H(+). Its activity is regulated as follows. Competitive inhibition by NADPH, 3-phospho-D-glycerate and ATP. Functionally, important as a means of generating NADPH for biosynthetic reactions. May be a main source of cytosolic NADPH for mannitol biosynthesis in leaves. In Apium graveolens (Celery), this protein is NADP-dependent glyceraldehyde-3-phosphate dehydrogenase.